A 376-amino-acid polypeptide reads, in one-letter code: Probable deoxyhypusine synthase (376 aa).

Residues 105–109, 131–133, Glu-137, and Asp-238 each bind NAD(+); these read SNLVS and TAG. Residue 136 to 137 coordinates spermidine; it reads EE. Asp-243 is a spermidine binding site. Gly-283 is a binding site for NAD(+). His-288 is a spermidine binding site. NAD(+) is bound at residue 308–309; the sequence is TG. Residues 314–316 and 323–329 contribute to the spermidine site; these read GSD and EAVSWGK. Catalysis depends on Lys-329, which acts as the Nucleophile. 342–343 lines the NAD(+) pocket; it reads EA.

It belongs to the deoxyhypusine synthase family. Requires NAD(+) as cofactor.

The enzyme catalyses [eIF5A protein]-L-lysine + spermidine = [eIF5A protein]-deoxyhypusine + propane-1,3-diamine. It participates in protein modification; eIF5A hypusination. Functionally, catalyzes the NAD-dependent oxidative cleavage of spermidine and the subsequent transfer of the butylamine moiety of spermidine to the epsilon-amino group of a critical lysine residue of the eIF-5A precursor protein to form the intermediate deoxyhypusine residue. This is the first step of the post-translational modification of that lysine into an unusual amino acid residue named hypusine. Hypusination is unique to mature eIF-5A factor and is essential for its function. The chain is Probable deoxyhypusine synthase (dhps) from Dictyostelium discoideum (Social amoeba).